The following is a 208-amino-acid chain: Putative archaetidylserine decarboxylase proenzyme (208 aa).

Catalysis depends on serine 171, which acts as the Schiff-base intermediate with substrate; via pyruvic acid. Serine 171 is subject to Pyruvic acid (Ser); by autocatalysis.

This sequence belongs to the phosphatidylserine decarboxylase family. PSD-A subfamily. As to quaternary structure, heterodimer of a large membrane-associated beta subunit and a small pyruvoyl-containing alpha subunit. Pyruvate is required as a cofactor. Post-translationally, is synthesized initially as an inactive proenzyme. Formation of the active enzyme involves a self-maturation process in which the active site pyruvoyl group is generated from an internal serine residue via an autocatalytic post-translational modification. Two non-identical subunits are generated from the proenzyme in this reaction, and the pyruvate is formed at the N-terminus of the alpha chain, which is derived from the carboxyl end of the proenzyme. The post-translation cleavage follows an unusual pathway, termed non-hydrolytic serinolysis, in which the side chain hydroxyl group of the serine supplies its oxygen atom to form the C-terminus of the beta chain, while the remainder of the serine residue undergoes an oxidative deamination to produce ammonia and the pyruvoyl prosthetic group on the alpha chain.

It is found in the cell membrane. It carries out the reaction archaetidylserine + H(+) = archaetidylethanolamine + CO2. Functionally, catalyzes the formation of archaetidylethanolamine (PtdEtn) from archaetidylserine (PtdSer). The polypeptide is Putative archaetidylserine decarboxylase proenzyme (Methanococcoides burtonii (strain DSM 6242 / NBRC 107633 / OCM 468 / ACE-M)).